The following is a 75-amino-acid chain: MSVQDKQGQNINVGDTVYTPYRGGKHEGQVADIVTTKEEAAEKGVKNPPKVLFTDQNNKDVAHNPGTLTDLDKQK.

Residues 1–13 show a composition bias toward polar residues; the sequence is MSVQDKQGQNINV. Disordered regions lie at residues 1 to 24 and 40 to 75; these read MSVQDKQGQNINVGDTVYTPYRGG and AAEKGVKNPPKVLFTDQNNKDVAHNPGTLTDLDKQK.

Functionally, may play a role in primary metabolism. The polypeptide is Putative primary metabolism protein HVA1 (Cryptococcus neoformans var. grubii serotype A (strain H99 / ATCC 208821 / CBS 10515 / FGSC 9487) (Filobasidiella neoformans var. grubii)).